The chain runs to 600 residues: Prostaglandin G/H synthase 1 (600 aa).

An N-terminal signal peptide occupies residues 1 to 24; the sequence is MSRQGISLRFPLLLLLLSPSPVLP. The region spanning 32–70 is the EGF-like domain; it reads PVNPCCYYPCQHQGICVRFGLDRYQCDCTRTGYYGPNCT. Cystine bridges form between C36–C47, C37–C159, C41–C57, and C59–C69. N68, N104, and N144 each carry an N-linked (GlcNAc...) asparagine glycan. The active-site Proton acceptor is the H207. Y385 serves as the catalytic For cyclooxygenase activity. H388 serves as a coordination point for heme b. A glycan (N-linked (GlcNAc...) asparagine) is linked at N410. An intrachain disulfide couples C569 to C575.

This sequence belongs to the prostaglandin G/H synthase family. In terms of assembly, homodimer. Heme b is required as a cofactor.

Its subcellular location is the microsome membrane. It localises to the endoplasmic reticulum membrane. It catalyses the reaction (5Z,8Z,11Z,14Z)-eicosatetraenoate + AH2 + 2 O2 = prostaglandin H2 + A + H2O. The enzyme catalyses (5Z,8Z,11Z,14Z)-eicosatetraenoate + 2 O2 = prostaglandin G2. It carries out the reaction prostaglandin G2 + AH2 = prostaglandin H2 + A + H2O. The catalysed reaction is (9Z,12Z)-octadecadienoate + AH2 + O2 = (9R)-hydroxy-(10E,12Z)-octadecadienoate + A + H2O. It catalyses the reaction (9Z,12Z)-octadecadienoate + AH2 + O2 = (9S)-hydroxy-(10E,12Z)-octadecadienoate + A + H2O. The enzyme catalyses (9Z,12Z)-octadecadienoate + AH2 + O2 = (13S)-hydroxy-(9Z,11E)-octadecadienoate + A + H2O. It carries out the reaction (9Z,12Z)-octadecadienoate + AH2 + O2 = (13R)-hydroxy-(9Z,11E)-octadecadienoate + A + H2O. The protein operates within lipid metabolism; prostaglandin biosynthesis. The cyclooxygenase activity is inhibited by nonsteroidal anti-inflammatory drugs (NSAIDs) including ibuprofen, flurbiprofen, ketoprofen, naproxen, flurbiprofen, anirolac, fenclofenac and diclofenac. In terms of biological role, dual cyclooxygenase and peroxidase that plays an important role in the biosynthesis pathway of prostanoids, a class of C20 oxylipins mainly derived from arachidonate ((5Z,8Z,11Z,14Z)-eicosatetraenoate, AA, C20:4(n-6)), with a particular role in the inflammatory response. The cyclooxygenase activity oxygenates AA to the hydroperoxy endoperoxide prostaglandin G2 (PGG2), and the peroxidase activity reduces PGG2 to the hydroxy endoperoxide prostaglandin H2 (PGH2), the precursor of all 2-series prostaglandins and thromboxanes. This complex transformation is initiated by abstraction of hydrogen at carbon 13 (with S-stereochemistry), followed by insertion of molecular O2 to form the endoperoxide bridge between carbon 9 and 11 that defines prostaglandins. The insertion of a second molecule of O2 (bis-oxygenase activity) yields a hydroperoxy group in PGG2 that is then reduced to PGH2 by two electrons. Involved in the constitutive production of prostanoids in particular in the stomach and platelets. In gastric epithelial cells, it is a key step in the generation of prostaglandins, such as prostaglandin E2 (PGE2), which plays an important role in cytoprotection. In platelets, it is involved in the generation of thromboxane A2 (TXA2), which promotes platelet activation and aggregation, vasoconstriction and proliferation of vascular smooth muscle cells. Can also use linoleate (LA, (9Z,12Z)-octadecadienoate, C18:2(n-6)) as substrate and produce hydroxyoctadecadienoates (HODEs) in a regio- and stereospecific manner, being (9R)-HODE ((9R)-hydroxy-(10E,12Z)-octadecadienoate) and (13S)-HODE ((13S)-hydroxy-(9Z,11E)-octadecadienoate) its major products. The chain is Prostaglandin G/H synthase 1 (PTGS1) from Bos taurus (Bovine).